Consider the following 183-residue polypeptide: Ribosome rescue factor SmrB (183 aa).

Positions 98–173 constitute a Smr domain; the sequence is LDLHGLTQLQ…GDAALLVLIE (76 aa).

It belongs to the SmrB family. In terms of assembly, associates with collided ribosomes, but not with correctly translating polysomes.

In terms of biological role, acts as a ribosome collision sensor. Detects stalled/collided disomes (pairs of ribosomes where the leading ribosome is stalled and a second ribosome has collided with it) and endonucleolytically cleaves mRNA at the 5' boundary of the stalled ribosome. Stalled/collided disomes form a new interface (primarily via the 30S subunits) that binds SmrB. Cleaved mRNA becomes available for tmRNA ligation, leading to ribosomal subunit dissociation and rescue of stalled ribosomes. The sequence is that of Ribosome rescue factor SmrB from Shigella sonnei (strain Ss046).